Consider the following 605-residue polypeptide: Pescadillo homolog (605 aa).

A sufficient for interaction with ERB1 region spans residues 51-484; it reads KANKGSTAPT…GEEEESESES (434 aa). Serine 288 is modified (phosphoserine). Residues 294-342 are a coiled coil; sequence LKSALNADEANTDETEKEEEQEKKQEKEQEKEQNEETELDTFEDNNKNK. Positions 297-342 are disordered; sequence ALNADEANTDETEKEEEQEKKQEKEQEKEQNEETELDTFEDNNKNK. Over residues 303 to 312 the composition is skewed to acidic residues; it reads ANTDETEKEE. Threonine 308 is modified (phosphothreonine). The segment covering 313–327 has biased composition (basic and acidic residues); that stretch reads EQEKKQEKEQEKEQN. The 95-residue stretch at 355 to 449 folds into the BRCT domain; sequence PVASLFSAFV…ELVPANKYLP (95 aa). The tract at residues 459–605 is disordered; sequence PWGDAIGYDP…AKLNKLDSKK (147 aa). Residues 473–510 show a composition bias toward acidic residues; that stretch reads EEGEEEESESESESEDQVEEEDQEVVAGEEDDDDDEEL. A coiled-coil region spans residues 530–605; sequence EADKDVNKSK…AKLNKLDSKK (76 aa). Positions 562–571 are enriched in basic residues; it reads KQKKLYKKMK. Positions 575 to 584 are enriched in basic and acidic residues; that stretch reads AKKEEQAENL. Residues 585 to 598 show a composition bias toward basic residues; that stretch reads KKKKKQIAKQKAKL.

This sequence belongs to the pescadillo family. In terms of assembly, component of the NOP7 complex, composed of ERB1, NOP7 and YTM1. The complex is held together by ERB1, which interacts with NOP7 via its N-terminal domain and with YTM1 via a high-affinity interaction between the seven-bladed beta-propeller domains of the 2 proteins. The NOP7 complex associates with the 66S pre-ribosome.

It is found in the nucleus. Its subcellular location is the nucleolus. The protein localises to the nucleoplasm. In terms of biological role, component of the NOP7 complex, which is required for maturation of the 25S and 5.8S ribosomal RNAs and formation of the 60S ribosome. The sequence is that of Pescadillo homolog from Saccharomyces cerevisiae (strain YJM789) (Baker's yeast).